The following is a 270-amino-acid chain: Putative serine acetyltransferase (270 aa).

The protein belongs to the transferase hexapeptide repeat family.

The protein resides in the cytoplasm. It localises to the nucleus. The enzyme catalyses L-serine + acetyl-CoA = O-acetyl-L-serine + CoA. It functions in the pathway amino-acid biosynthesis; L-cysteine biosynthesis; L-cysteine from L-serine: step 1/2. This Schizosaccharomyces pombe (strain 972 / ATCC 24843) (Fission yeast) protein is Putative serine acetyltransferase.